The chain runs to 188 residues: Ribosome maturation factor RimM (188 aa).

Residues 93–175 (QDEFYFTDLI…EIEVQGDLSD (83 aa)) enclose the PRC barrel domain.

This sequence belongs to the RimM family. As to quaternary structure, binds ribosomal protein uS19.

The protein resides in the cytoplasm. Its function is as follows. An accessory protein needed during the final step in the assembly of 30S ribosomal subunit, possibly for assembly of the head region. Essential for efficient processing of 16S rRNA. May be needed both before and after RbfA during the maturation of 16S rRNA. It has affinity for free ribosomal 30S subunits but not for 70S ribosomes. The protein is Ribosome maturation factor RimM of Gluconacetobacter diazotrophicus (strain ATCC 49037 / DSM 5601 / CCUG 37298 / CIP 103539 / LMG 7603 / PAl5).